The chain runs to 261 residues: Aromatic peroxygenase (261 aa).

Position 36 (Cys-36) interacts with heme. Residues Asn-100, Asn-137, Asn-141, and Asn-220 are each glycosylated (N-linked (GlcNAc...) asparagine).

It belongs to the chloroperoxidase family. It depends on heme b as a cofactor. In terms of processing, N-glycosylated.

Its function is as follows. Aromatic peroxidase that oxidizes aryl alcohols into the corresponding aldehydes and then into the corresponding benzoic acids. Catalyzes the regioselective peroxide-dependent hydroxylation of naphthalene to 1-naphthol and to a far lesser extent 2-naphthol via a naphthalene 1,2-oxide intermediate. Halogenates phenol to 2-bromophenol and 4-bromophenol. Oxidizes the sulfur-containing heterocycle dibenzothiophene to yield sulfoxidation products, and trace amounts of ring-hydroxylation products. The sequence is that of Aromatic peroxygenase from Coprinellus radians (Coprophilous mushroom).